The chain runs to 101 residues: Large ribosomal subunit protein bL28 (101 aa).

The protein belongs to the bacterial ribosomal protein bL28 family.

The chain is Large ribosomal subunit protein bL28 from Caulobacter sp. (strain K31).